Reading from the N-terminus, the 350-residue chain is Probable deoxyhypusine synthase (350 aa).

NAD(+)-binding positions include 96–100, 122–124, E128, and D229; these read SNLIS and TAG. A spermidine-binding site is contributed by 127–128; sequence EE. D234 contacts spermidine. G276 contributes to the NAD(+) binding site. Residue H281 participates in spermidine binding. An NAD(+)-binding site is contributed by 301–302; sequence SA. Residues 307–309 and 316–322 each bind spermidine; these read GSD and EAVSWGK. The Nucleophile role is filled by K322. Residue 335–336 coordinates NAD(+); that stretch reads EV.

This sequence belongs to the deoxyhypusine synthase family. Requires NAD(+) as cofactor.

It carries out the reaction [eIF5A protein]-L-lysine + spermidine = [eIF5A protein]-deoxyhypusine + propane-1,3-diamine. It functions in the pathway protein modification; eIF5A hypusination. Catalyzes the NAD-dependent oxidative cleavage of spermidine and the subsequent transfer of the butylamine moiety of spermidine to the epsilon-amino group of a specific lysine residue of the eIF-5A precursor protein to form the intermediate deoxyhypusine residue. This is Probable deoxyhypusine synthase from Schizosaccharomyces pombe (strain 972 / ATCC 24843) (Fission yeast).